Reading from the N-terminus, the 236-residue chain is Transmembrane protein 70 homolog, mitochondrial (236 aa).

A mitochondrion-targeting transit peptide spans M1–E64. 2 consecutive transmembrane segments (helical) span residues M83–L103 and V116–I136.

Belongs to the TMEM70 family. Associates with mitochondrial complex I assembly intermediates during its biogenesis.

It is found in the mitochondrion membrane. Scaffold protein that participates in the c-ring assembly of mitochondrial ATP synthase (F(1)F(0) ATP synthase or complex V). Also binds the mitochondrial proton-transporting ATP synthase complex I and may play a role in the stability of its membrane-bound subassemblies. This is Transmembrane protein 70 homolog, mitochondrial from Drosophila melanogaster (Fruit fly).